A 266-amino-acid chain; its full sequence is MSQASSGFTPAAQVQHGSSKGAFNSAYIPTEEEKRVFRECNSESFWYRSLPFSAIAVGITQVLVAKGMLSPSPRFGALPKIAFAGIFGYIGGKMSYVRVCQEKFMKLENSPLGEALRQGRLRHVSSEMNQPDFDPNSSESQQPGSESVQQPATEVSSATESYSSYTSDYTYSTPSQSYETTPFSSGFSDSGPANIRDDLPSQAPLYMEEDVPKRKPVLYEELRNKNRENYEVTLPQKNQTQMKPQMEVMQPKKEAKKNKYGDSWEE.

In terms of domain architecture, OCIA spans 1–114; sequence MSQASSGFTP…MKLENSPLGE (114 aa). 2 disordered regions span residues 127 to 213 and 225 to 266; these read EMNQ…DVPK and KNRE…SWEE. Polar residues predominate over residues 135-155; sequence PNSSESQQPGSESVQQPATEV. Residues 156 to 178 show a composition bias toward low complexity; the sequence is SSATESYSSYTSDYTYSTPSQSY. The segment covering 179-188 has biased composition (polar residues); that stretch reads ETTPFSSGFS. Basic and acidic residues predominate over residues 250–266; it reads QPKKEAKKNKYGDSWEE.

This sequence belongs to the OCIAD1 family.

It is found in the endosome. This chain is OCIA domain-containing protein 1 (ociad1), found in Danio rerio (Zebrafish).